A 336-amino-acid chain; its full sequence is Opsin-1, short-wave-sensitive 1 (336 aa).

Residues M1–A29 are Extracellular-facing. The N-linked (GlcNAc...) asparagine glycan is linked to N10. Residues F30–V54 form a helical membrane-spanning segment. Over T55–N66 the chain is Cytoplasmic. Residues Y67 to A91 form a helical membrane-spanning segment. At A92 to E106 the chain is on the extracellular side. C103 and C180 form a disulfide bridge. Residues A107–F126 form a helical membrane-spanning segment. The Cytoplasmic portion of the chain corresponds to E127–Q145. The chain crosses the membrane as a helical span at residues A146–S169. At R170 to S195 the chain is on the extracellular side. The chain crosses the membrane as a helical span at residues Y196–L223. At R224–R245 the chain is on the cytoplasmic side. A helical transmembrane segment spans residues M246–A269. Topologically, residues N270–D277 are extracellular. A helical transmembrane segment spans residues Y278–M302. K289 bears the N6-(retinylidene)lysine mark. Residues N303–A336 lie on the Cytoplasmic side of the membrane.

Belongs to the G-protein coupled receptor 1 family. Opsin subfamily. Post-translationally, phosphorylated on some or all of the serine and threonine residues present in the C-terminal region. In terms of tissue distribution, retinal short single cones, outer and inner segments.

The protein resides in the membrane. Functionally, visual pigments are the light-absorbing molecules that mediate vision. They consist of an apoprotein, opsin, covalently linked to cis-retinal. This chain is Opsin-1, short-wave-sensitive 1 (opn1sw1), found in Danio rerio (Zebrafish).